Here is a 253-residue protein sequence, read N- to C-terminus: E3 ubiquitin-protein ligase MARCHF3 (253 aa).

The RING-CH-type zinc finger occupies Ser-63–Glu-123. The Zn(2+) site is built by Cys-71, Cys-74, Cys-87, Cys-89, His-97, Cys-100, Cys-113, and Cys-116. 2 consecutive transmembrane segments (helical) span residues Leu-145 to Leu-165 and Ala-182 to Val-202. 2 positions are modified to phosphoserine: Ser-237 and Ser-243.

As to quaternary structure, interacts with MARCHF2 and STX6.

It localises to the cytoplasmic vesicle membrane. Its subcellular location is the early endosome membrane. It carries out the reaction S-ubiquitinyl-[E2 ubiquitin-conjugating enzyme]-L-cysteine + [acceptor protein]-L-lysine = [E2 ubiquitin-conjugating enzyme]-L-cysteine + N(6)-ubiquitinyl-[acceptor protein]-L-lysine.. The protein operates within protein modification; protein ubiquitination. Its function is as follows. E3 ubiquitin-protein ligase which may be involved in endosomal trafficking. E3 ubiquitin ligases accept ubiquitin from an E2 ubiquitin-conjugating enzyme in the form of a thioester and then directly transfer the ubiquitin to targeted substrates. This is E3 ubiquitin-protein ligase MARCHF3 from Homo sapiens (Human).